A 33-amino-acid polypeptide reads, in one-letter code: Brevinin-2Ef (33 aa).

The cysteines at positions 27 and 33 are disulfide-linked.

As to expression, expressed by the skin glands.

It is found in the secreted. Its function is as follows. Shows antibacterial activity against representative Gram-negative and Gram-positive bacterial species, and hemolytic activity. The polypeptide is Brevinin-2Ef (Pelophylax ridibundus (Marsh frog)).